Consider the following 477-residue polypeptide: Probable cytosolic Fe-S cluster assembly factor CG17683 (477 aa).

[4Fe-4S] cluster is bound by residues Cys23, Cys68, Cys71, Cys74, Cys187, Cys243, Cys395, and Cys399.

This sequence belongs to the NARF family.

Component of the cytosolic iron-sulfur (Fe/S) protein assembly machinery. Required for maturation of extramitochondrial Fe/S proteins. The chain is Probable cytosolic Fe-S cluster assembly factor CG17683 from Drosophila melanogaster (Fruit fly).